The primary structure comprises 420 residues: 3-isopropylmalate dehydratase large subunit (420 aa).

C301, C361, and C364 together coordinate [4Fe-4S] cluster.

It belongs to the aconitase/IPM isomerase family. LeuC type 2 subfamily. As to quaternary structure, heterodimer of LeuC and LeuD. [4Fe-4S] cluster serves as cofactor.

The enzyme catalyses (2R,3S)-3-isopropylmalate = (2S)-2-isopropylmalate. It participates in amino-acid biosynthesis; L-leucine biosynthesis; L-leucine from 3-methyl-2-oxobutanoate: step 2/4. In terms of biological role, catalyzes the isomerization between 2-isopropylmalate and 3-isopropylmalate, via the formation of 2-isopropylmaleate. The chain is 3-isopropylmalate dehydratase large subunit from Desulfovibrio desulfuricans (strain ATCC 27774 / DSM 6949 / MB).